The primary structure comprises 395 residues: Chalcone synthase (395 aa).

Residue C164 is part of the active site.

It belongs to the thiolase-like superfamily. Chalcone/stilbene synthases family.

It catalyses the reaction (E)-4-coumaroyl-CoA + 3 malonyl-CoA + 3 H(+) = 2',4,4',6'-tetrahydroxychalcone + 3 CO2 + 4 CoA. It participates in secondary metabolite biosynthesis; flavonoid biosynthesis. Functionally, the primary product of this enzyme is 4,2',4',6'-tetrahydroxychalcone (also termed naringenin-chalcone or chalcone) which can under specific conditions spontaneously isomerize into naringenin. In Betula pendula (European white birch), this protein is Chalcone synthase (CHS).